The chain runs to 245 residues: PF03932 family protein CutC (245 aa).

This sequence belongs to the CutC family.

Its subcellular location is the cytoplasm. The polypeptide is PF03932 family protein CutC (Caulobacter vibrioides (strain ATCC 19089 / CIP 103742 / CB 15) (Caulobacter crescentus)).